The sequence spans 551 residues: Sialic acid-binding Ig-like lectin 5 (551 aa).

The first 16 residues, 1–16 (MLPLLLLPLLWGGSLQ), serve as a signal peptide directing secretion. Residues 17-441 (EKPVYELQVQ…LGTGVVPAAL (425 aa)) lie on the Extracellular side of the membrane. Residues 19–136 (PVYELQVQKS…KYSYQQNKLN (118 aa)) enclose the Ig-like V-type domain. 3 cysteine pairs are disulfide-bonded: Cys-36–Cys-170, Cys-41–Cys-101, and Cys-164–Cys-213. A glycan (N-linked (GlcNAc...) asparagine) is linked at Asn-100. Arg-119, Lys-127, and Ser-129 together coordinate N-acetylneuraminate. Residues 146 to 229 (PDIHFLEPLE…AQVTTERTVQ (84 aa)) enclose the Ig-like C2-type 1 domain. A disordered region spans residues 189-210 (DPETTRSSELTLTPRPEDHGTN). 3 N-linked (GlcNAc...) asparagine glycosylation sites follow: Asn-210, Asn-231, and Asn-253. The Ig-like C2-type 2 domain occupies 236-330 (PQTITIFRNG…GFLQIFLNLS (95 aa)). A disulfide bridge links Cys-269 with Cys-314. Asn-328, Asn-375, Asn-384, and Asn-393 each carry an N-linked (GlcNAc...) asparagine glycan. The helical transmembrane segment at 442 to 462 (GGAGVMALLCICLCLIFFLIV) threads the bilayer. Topologically, residues 463–551 (KARRKQAAGR…TEYSEIKTSK (89 aa)) are cytoplasmic. Residues 469–551 (AAGRPEKMDD…TEYSEIKTSK (83 aa)) are disordered. The ITIM motif motif lies at 518-523 (LHYASL). Residues 528–537 (MKSREPKDQE) show a composition bias toward basic and acidic residues. The SLAM-like motif signature appears at 542-547 (TEYSEI).

Belongs to the immunoglobulin superfamily. SIGLEC (sialic acid binding Ig-like lectin) family. Expressed by monocytic/myeloid lineage cells. Found at high levels in peripheral blood leukocytes, spleen, bone marrow and at lower levels in lymph node, lung, appendix, placenta, pancreas and thymus. Expressed by monocytes and neutrophils but absent from leukemic cell lines representing early stages of myelomonocytic differentiation.

It localises to the membrane. Functionally, putative adhesion molecule that mediates sialic-acid dependent binding to cells. Binds equally to alpha-2,3-linked and alpha-2,6-linked sialic acid. The sialic acid recognition site may be masked by cis interactions with sialic acids on the same cell surface. This is Sialic acid-binding Ig-like lectin 5 (SIGLEC5) from Homo sapiens (Human).